We begin with the raw amino-acid sequence, 258 residues long: Type III pantothenate kinase (258 aa).

6-13 provides a ligand contact to ATP; the sequence is DVGNSDTV. A substrate-binding site is contributed by 108–111; the sequence is GSDR. The Proton acceptor role is filled by Asp110. Asp130 is a K(+) binding site. Residue Thr133 participates in ATP binding. Thr185 serves as a coordination point for substrate.

This sequence belongs to the type III pantothenate kinase family. As to quaternary structure, homodimer. Requires NH4(+) as cofactor. K(+) serves as cofactor.

It localises to the cytoplasm. The enzyme catalyses (R)-pantothenate + ATP = (R)-4'-phosphopantothenate + ADP + H(+). It participates in cofactor biosynthesis; coenzyme A biosynthesis; CoA from (R)-pantothenate: step 1/5. Functionally, catalyzes the phosphorylation of pantothenate (Pan), the first step in CoA biosynthesis. This is Type III pantothenate kinase from Thermobifida fusca (strain YX).